A 156-amino-acid chain; its full sequence is MASGMRRTGRELAIKIIYSFDGTGSVEALLATFWSNFRFRDDVLGEPLEDSSQAVAEPVREFAEDLVRGVAENLEKIDGLIGEFSTNWSLERMARVDLAILRMATYELLGHLDVPVSVIINEAVEIGKRYGTKETPSFVNGILDRISRTCRPVVAS.

This sequence belongs to the NusB family.

In terms of biological role, involved in transcription antitermination. Required for transcription of ribosomal RNA (rRNA) genes. Binds specifically to the boxA antiterminator sequence of the ribosomal RNA (rrn) operons. This chain is Transcription antitermination protein NusB, found in Syntrophotalea carbinolica (strain DSM 2380 / NBRC 103641 / GraBd1) (Pelobacter carbinolicus).